The following is a 477-amino-acid chain: Ribulose bisphosphate carboxylase large chain (477 aa).

Positions 1 to 2 (MS) are excised as a propeptide. Position 3 is an N-acetylproline (Pro-3). Substrate-binding residues include Asn-123 and Thr-173. The active-site Proton acceptor is the Lys-175. Residue Lys-177 participates in substrate binding. Lys-201, Asp-203, and Glu-204 together coordinate Mg(2+). The residue at position 201 (Lys-201) is an N6-carboxylysine. His-294 serves as the catalytic Proton acceptor. 3 residues coordinate substrate: Arg-295, His-327, and Ser-379.

It belongs to the RuBisCO large chain family. Type I subfamily. Heterohexadecamer of 8 large chains and 8 small chains; disulfide-linked. The disulfide link is formed within the large subunit homodimers. Mg(2+) serves as cofactor. The disulfide bond which can form between Cys-247 in the large chain dimeric partners within the hexadecamer appears to be associated with oxidative stress and protein turnover.

It localises to the plastid. It is found in the chloroplast. The catalysed reaction is 2 (2R)-3-phosphoglycerate + 2 H(+) = D-ribulose 1,5-bisphosphate + CO2 + H2O. The enzyme catalyses D-ribulose 1,5-bisphosphate + O2 = 2-phosphoglycolate + (2R)-3-phosphoglycerate + 2 H(+). RuBisCO catalyzes two reactions: the carboxylation of D-ribulose 1,5-bisphosphate, the primary event in carbon dioxide fixation, as well as the oxidative fragmentation of the pentose substrate in the photorespiration process. Both reactions occur simultaneously and in competition at the same active site. This chain is Ribulose bisphosphate carboxylase large chain (rbcL), found in Triticum aestivum (Wheat).